The primary structure comprises 168 residues: UPF0178 protein RBAM_023530 (168 aa).

The protein belongs to the UPF0178 family.

The sequence is that of UPF0178 protein RBAM_023530 from Bacillus velezensis (strain DSM 23117 / BGSC 10A6 / LMG 26770 / FZB42) (Bacillus amyloliquefaciens subsp. plantarum).